The primary structure comprises 629 residues: Phosphomethylpyrimidine synthase (629 aa).

Residues 1-21 (MSIKAKNAAHLRESAQVDSGS) are disordered. Residues N233, M262, Y291, H327, 347–349 (SRG), 388–391 (DGLR), and E427 contribute to the substrate site. H431 serves as a coordination point for Zn(2+). Y454 provides a ligand contact to substrate. H495 serves as a coordination point for Zn(2+). [4Fe-4S] cluster is bound by residues C575, C578, and C583.

It belongs to the ThiC family. As to quaternary structure, homodimer. Requires [4Fe-4S] cluster as cofactor.

It carries out the reaction 5-amino-1-(5-phospho-beta-D-ribosyl)imidazole + S-adenosyl-L-methionine = 4-amino-2-methyl-5-(phosphooxymethyl)pyrimidine + CO + 5'-deoxyadenosine + formate + L-methionine + 3 H(+). It participates in cofactor biosynthesis; thiamine diphosphate biosynthesis. Its function is as follows. Catalyzes the synthesis of the hydroxymethylpyrimidine phosphate (HMP-P) moiety of thiamine from aminoimidazole ribotide (AIR) in a radical S-adenosyl-L-methionine (SAM)-dependent reaction. The protein is Phosphomethylpyrimidine synthase of Pseudomonas syringae pv. syringae (strain B728a).